We begin with the raw amino-acid sequence, 214 residues long: Leucyl/phenylalanyl-tRNA--protein transferase (214 aa).

It belongs to the L/F-transferase family.

It is found in the cytoplasm. It catalyses the reaction N-terminal L-lysyl-[protein] + L-leucyl-tRNA(Leu) = N-terminal L-leucyl-L-lysyl-[protein] + tRNA(Leu) + H(+). The enzyme catalyses N-terminal L-arginyl-[protein] + L-leucyl-tRNA(Leu) = N-terminal L-leucyl-L-arginyl-[protein] + tRNA(Leu) + H(+). It carries out the reaction L-phenylalanyl-tRNA(Phe) + an N-terminal L-alpha-aminoacyl-[protein] = an N-terminal L-phenylalanyl-L-alpha-aminoacyl-[protein] + tRNA(Phe). Its function is as follows. Functions in the N-end rule pathway of protein degradation where it conjugates Leu, Phe and, less efficiently, Met from aminoacyl-tRNAs to the N-termini of proteins containing an N-terminal arginine or lysine. The sequence is that of Leucyl/phenylalanyl-tRNA--protein transferase from Cereibacter sphaeroides (strain KD131 / KCTC 12085) (Rhodobacter sphaeroides).